The following is a 540-amino-acid chain: Amino acid transporter AVT1B (540 aa).

Residues 1-11 (MNHSTSDQSLY) show a composition bias toward polar residues. The segment at 1-55 (MNHSTSDQSLYIESDDGDDERKHLSDDEDDDGTLSDTSDAYNQNQHHLSKASPYS) is disordered. Transmembrane regions (helical) follow at residues 155–175 (AVLNGVNVLCGVGILSTPYAV), 180–200 (WLGLIILFAFGILCFYTGLLL), 227–247 (ILVSVILYMELYAMSVEYIIL), 273–293 (LFALLTTLAVLPTVWLRDLSV), 297–317 (ISAGGVIASVLVVLCLFWVGL), 332–352 (LATLPVSVGLYGYCYSGHGVF), 367–387 (AVLLASFGICTLMYAGVAVMG), 412–432 (IALWTTVVNPFTKYALTLSPV), 452–474 (IAIRSALAISTLLVGLAIPFFGL), 478–500 (LIGSFLTMLITLILPPACFLSIL), and 511–531 (ICILIMTVGAVCSVIGTYSAL).

The protein belongs to the amino acid/polyamine transporter 2 family. Amino acid/auxin permease (AAAP) (TC 2.A.18.5) subfamily.

The protein resides in the membrane. The sequence is that of Amino acid transporter AVT1B from Arabidopsis thaliana (Mouse-ear cress).